Here is a 396-residue protein sequence, read N- to C-terminus: Small ribosomal subunit protein mS27 (396 aa).

The protein belongs to the mitochondrion-specific ribosomal protein mS27 family. As to quaternary structure, component of the mitochondrial small ribosomal subunit (mt-SSU). Mature N.crassa 74S mitochondrial ribosomes consist of a small (37S) and a large (54S) subunit. The 37S small subunit contains a 16S ribosomal RNA (16S mt-rRNA) and 32 different proteins. The 54S large subunit contains a 23S rRNA (23S mt-rRNA) and 42 different proteins.

Its subcellular location is the mitochondrion. In terms of biological role, component of the mitochondrial ribosome (mitoribosome), a dedicated translation machinery responsible for the synthesis of mitochondrial genome-encoded proteins, including at least some of the essential transmembrane subunits of the mitochondrial respiratory chain. The mitoribosomes are attached to the mitochondrial inner membrane and translation products are cotranslationally integrated into the membrane. This chain is Small ribosomal subunit protein mS27 (mrp13), found in Neurospora crassa (strain ATCC 24698 / 74-OR23-1A / CBS 708.71 / DSM 1257 / FGSC 987).